We begin with the raw amino-acid sequence, 293 residues long: Formamidopyrimidine-DNA glycosylase (293 aa).

The Schiff-base intermediate with DNA role is filled by Pro-2. Glu-3 serves as the catalytic Proton donor. Lys-58 functions as the Proton donor; for beta-elimination activity in the catalytic mechanism. The DNA site is built by His-104, Arg-127, and Arg-170. The FPG-type zinc-finger motif lies at 257–293 (SVYGREGKPCRNPACGGTVERVVQSGRSTFFCASCQT). The active-site Proton donor; for delta-elimination activity is Arg-283.

The protein belongs to the FPG family. Monomer. Requires Zn(2+) as cofactor.

The enzyme catalyses Hydrolysis of DNA containing ring-opened 7-methylguanine residues, releasing 2,6-diamino-4-hydroxy-5-(N-methyl)formamidopyrimidine.. It carries out the reaction 2'-deoxyribonucleotide-(2'-deoxyribose 5'-phosphate)-2'-deoxyribonucleotide-DNA = a 3'-end 2'-deoxyribonucleotide-(2,3-dehydro-2,3-deoxyribose 5'-phosphate)-DNA + a 5'-end 5'-phospho-2'-deoxyribonucleoside-DNA + H(+). Functionally, involved in base excision repair of DNA damaged by oxidation or by mutagenic agents. Acts as a DNA glycosylase that recognizes and removes damaged bases. Has a preference for oxidized purines, such as 7,8-dihydro-8-oxoguanine (8-oxoG). Has AP (apurinic/apyrimidinic) lyase activity and introduces nicks in the DNA strand. Cleaves the DNA backbone by beta-delta elimination to generate a single-strand break at the site of the removed base with both 3'- and 5'-phosphates. In Brucella canis (strain ATCC 23365 / NCTC 10854 / RM-666), this protein is Formamidopyrimidine-DNA glycosylase.